The chain runs to 239 residues: Proteasome subunit beta (239 aa).

Polar residues predominate over residues 1–16; it reads MRQPDSSLPRTGQDHT. Residues 1-32 form a disordered region; sequence MRQPDSSLPRTGQDHTLSPYEPELGEVPSNDL. Positions 1-44 are cleaved as a propeptide — removed in mature form; by autocatalysis; the sequence is MRQPDSSLPRTGQDHTLSPYEPELGEVPSNDLSMADLDNVNKTG. The Nucleophile role is filled by threonine 45.

The protein belongs to the peptidase T1B family. As to quaternary structure, the 20S proteasome core is composed of 14 alpha and 14 beta subunits that assemble into four stacked heptameric rings, resulting in a barrel-shaped structure. The two inner rings, each composed of seven catalytic beta subunits, are sandwiched by two outer rings, each composed of seven alpha subunits. The catalytic chamber with the active sites is on the inside of the barrel. Has a gated structure, the ends of the cylinder being occluded by the N-termini of the alpha-subunits. Is capped at one or both ends by the proteasome regulatory ATPase, PAN.

It is found in the cytoplasm. It carries out the reaction Cleavage of peptide bonds with very broad specificity.. With respect to regulation, the formation of the proteasomal ATPase PAN-20S proteasome complex, via the docking of the C-termini of PAN into the intersubunit pockets in the alpha-rings, triggers opening of the gate for substrate entry. Interconversion between the open-gate and close-gate conformations leads to a dynamic regulation of the 20S proteasome proteolysis activity. In terms of biological role, component of the proteasome core, a large protease complex with broad specificity involved in protein degradation. The polypeptide is Proteasome subunit beta (Natronomonas pharaonis (strain ATCC 35678 / DSM 2160 / CIP 103997 / JCM 8858 / NBRC 14720 / NCIMB 2260 / Gabara) (Halobacterium pharaonis)).